Here is a 388-residue protein sequence, read N- to C-terminus: Succinate--CoA ligase [ADP-forming] subunit beta (388 aa).

Residues lysine 46, 53 to 55 (GRG), glutamate 99, cysteine 102, and glutamate 107 contribute to the ATP site. Residues asparagine 199 and aspartate 213 each contribute to the Mg(2+) site. Substrate is bound by residues asparagine 264 and 321-323 (GIV).

It belongs to the succinate/malate CoA ligase beta subunit family. Heterotetramer of two alpha and two beta subunits. The cofactor is Mg(2+).

The catalysed reaction is succinate + ATP + CoA = succinyl-CoA + ADP + phosphate. The enzyme catalyses GTP + succinate + CoA = succinyl-CoA + GDP + phosphate. The protein operates within carbohydrate metabolism; tricarboxylic acid cycle; succinate from succinyl-CoA (ligase route): step 1/1. Functionally, succinyl-CoA synthetase functions in the citric acid cycle (TCA), coupling the hydrolysis of succinyl-CoA to the synthesis of either ATP or GTP and thus represents the only step of substrate-level phosphorylation in the TCA. The beta subunit provides nucleotide specificity of the enzyme and binds the substrate succinate, while the binding sites for coenzyme A and phosphate are found in the alpha subunit. This Actinobacillus pleuropneumoniae serotype 7 (strain AP76) protein is Succinate--CoA ligase [ADP-forming] subunit beta.